A 486-amino-acid polypeptide reads, in one-letter code: Malonate-semialdehyde dehydrogenase 1 (486 aa).

5 residues coordinate NAD(+): F154, K178, E181, R182, and S231. The Nucleophile role is filled by C286. An NAD(+)-binding site is contributed by E386.

It belongs to the aldehyde dehydrogenase family. IolA subfamily. In terms of assembly, homotetramer.

It carries out the reaction 3-oxopropanoate + NAD(+) + CoA + H2O = hydrogencarbonate + acetyl-CoA + NADH + H(+). The catalysed reaction is 2-methyl-3-oxopropanoate + NAD(+) + CoA + H2O = propanoyl-CoA + hydrogencarbonate + NADH + H(+). The protein operates within polyol metabolism; myo-inositol degradation into acetyl-CoA; acetyl-CoA from myo-inositol: step 7/7. Catalyzes the oxidation of malonate semialdehyde (MSA) and methylmalonate semialdehyde (MMSA) into acetyl-CoA and propanoyl-CoA, respectively. Is involved in a myo-inositol catabolic pathway. Bicarbonate, and not CO2, is the end-product of the enzymatic reaction. The sequence is that of Malonate-semialdehyde dehydrogenase 1 from Oceanobacillus iheyensis (strain DSM 14371 / CIP 107618 / JCM 11309 / KCTC 3954 / HTE831).